The primary structure comprises 842 residues: Follistatin-related protein 4 (842 aa).

The first 22 residues, 1 to 22 (MKPGGFWLHLTLLGASLPAALG), serve as a signal peptide directing secretion. The 55-residue stretch at 81-135 (KTGEPECQCLEACRPSYVPVCGSDGRFYENHCKLHRAACLLGKRITVIHSKDCFL) folds into the Kazal-like domain. 3 disulfide bridges follow: cysteine 87–cysteine 119, cysteine 93–cysteine 112, and cysteine 101–cysteine 133. The 36-residue stretch at 174 to 209 (QKRLLVESLFRDLDADGNGHLSSSELAQHVLKKQDL) folds into the EF-hand domain. Aspartate 187, aspartate 189, asparagine 191, histidine 193, and glutamate 198 together coordinate Ca(2+). Ig-like domains lie at 251 to 338 (PEDR…LQVN) and 341 to 426 (PVIR…EDIS). 2 disulfide bridges follow: cysteine 270–cysteine 321 and cysteine 362–cysteine 413. Asparagine 318 carries N-linked (GlcNAc...) asparagine glycosylation.

Its subcellular location is the secreted. In Homo sapiens (Human), this protein is Follistatin-related protein 4 (FSTL4).